Here is a 292-residue protein sequence, read N- to C-terminus: Keratin-associated protein 10-9 (292 aa).

25 repeat units span residues 26-30 (CCEPP), 31-35 (CCATS), 36-40 (CCAPA), 57-61 (CCQVT), 79-83 (CCQQS), 99-103 (CCVPV), 104-108 (CCKPV), 109-113 (CCVPV), 114-118 (CCGAS), 120-124 (CCQQS), 130-134 (CCASS), 140-144 (CCVPV), 145-149 (CCKPV), 150-154 (CCAPT), 162-166 (CCQQS), 172-176 (CCTSS), 182-186 (YCVPV), 187-191 (CCKPV), 192-196 (CCKPI), 197-201 (CCVPV), 209-213 (CCQQS), 219-223 (CCTTS), 224-228 (CCRPS), 243-247 (CCVPV), and 250-254 (CCAPT). Positions 26–254 (CCEPPCCATS…VPVSSCCAPT (229 aa)) are 25 X 5 AA repeats of C-C-X(3).

This sequence belongs to the KRTAP type 10 family. Interacts with hair keratins. In terms of tissue distribution, restricted to a narrow region of the hair fiber cuticle, lying approximately 20 cell layers above the apex of the dermal papilla of the hair root; not detected in any other tissues.

In terms of biological role, in the hair cortex, hair keratin intermediate filaments are embedded in an interfilamentous matrix, consisting of hair keratin-associated proteins (KRTAP), which are essential for the formation of a rigid and resistant hair shaft through their extensive disulfide bond cross-linking with abundant cysteine residues of hair keratins. The matrix proteins include the high-sulfur and high-glycine-tyrosine keratins. This Homo sapiens (Human) protein is Keratin-associated protein 10-9 (KRTAP10-9).